A 182-amino-acid chain; its full sequence is Riboflavin kinase (182 aa).

Residues Thr39 and Asn41 each coordinate Mg(2+). Glu117 serves as the catalytic Nucleophile.

The protein belongs to the flavokinase family. It depends on Zn(2+) as a cofactor. Mg(2+) is required as a cofactor.

The enzyme catalyses riboflavin + ATP = FMN + ADP + H(+). Its pathway is cofactor biosynthesis; FMN biosynthesis; FMN from riboflavin (ATP route): step 1/1. Functionally, catalyzes the phosphorylation of riboflavin (vitamin B2) to form flavin mononucleotide (FMN) coenzyme. The protein is Riboflavin kinase (FMN1) of Lodderomyces elongisporus (strain ATCC 11503 / CBS 2605 / JCM 1781 / NBRC 1676 / NRRL YB-4239) (Yeast).